Consider the following 706-residue polypeptide: MEKTFNLTRRDDGIAILTMDVPGETMNTLKAQFGPEISEILADIKSDSSIRGLVLISGKKDSFVAGADISMLDACKTAGDAKALSQQGHVVFNELEALTIPVVAAIHGACLGGGLELALACHQRVCSDDGKTMLGVPEVQLGLLPGGGGTQRLPRLVGITTALDMMLTGKQIRPKQALKMGLVNDVVPQTILLQTAVEMALAGKRAPKPVKKSLVNQVLEGTSFGRNIIFDQATKQVEKKTQGNYPAPAKIIDCVRQGITKGMQKGLEVEASHFAELVVSKESEALRSIFFATTEMKKETGAEGASPRKVKKAVILGGGLMGGGIASVTTTKAKIPVRVKDISEKGLSNALAYAYKLLDKGVKRRHMTPAARDNLMALMTTTTEYKGVKDADIVVEAVFEDLALKHQMVKDIERECGEHTIFASNTSSLPISQIAEAATRPENVIGLHYFSPVEKMPLVEVIAHAKTSPETIATTVAFARKQGKTPIVVQDGAGFYVNRILALYMNEAAQLLLEGQSVEHLDKALVKFGFPVGPITLLDEVGIDVGAKISPILEKELGERFKAPAAFDKLLGDDRKGRKNGKGFYQYGASSKKAKAVDESVYGVLGIKPGTNKDAKALAERCVVQMLNEAVRCLDDGIIASPRDGDIGAIFGIGFPPFLGGPFHYIDTLGAANLVRILEGYQSQLGSRFEPCERLKTMAQENAHFF.

The interval 1–188 (MEKTFNLTRR…KMGLVNDVVP (188 aa)) is enoyl-CoA hydratase. Positions 308-706 (RKVKKAVILG…TMAQENAHFF (399 aa)) are 3-hydroxyacyl-CoA dehydrogenase.

This sequence in the N-terminal section; belongs to the enoyl-CoA hydratase/isomerase family. The protein in the central section; belongs to the 3-hydroxyacyl-CoA dehydrogenase family. Heterotetramer of two alpha chains (FadJ) and two beta chains (FadI).

It is found in the cytoplasm. It carries out the reaction a (3S)-3-hydroxyacyl-CoA = a (2E)-enoyl-CoA + H2O. It catalyses the reaction a 4-saturated-(3S)-3-hydroxyacyl-CoA = a (3E)-enoyl-CoA + H2O. The enzyme catalyses a (3S)-3-hydroxyacyl-CoA + NAD(+) = a 3-oxoacyl-CoA + NADH + H(+). The catalysed reaction is (3S)-3-hydroxybutanoyl-CoA = (3R)-3-hydroxybutanoyl-CoA. It functions in the pathway lipid metabolism; fatty acid beta-oxidation. Catalyzes the formation of a hydroxyacyl-CoA by addition of water on enoyl-CoA. Also exhibits 3-hydroxyacyl-CoA epimerase and 3-hydroxyacyl-CoA dehydrogenase activities. In Shewanella baltica (strain OS155 / ATCC BAA-1091), this protein is Fatty acid oxidation complex subunit alpha.